Here is a 366-residue protein sequence, read N- to C-terminus: Holliday junction branch migration complex subunit RuvB (366 aa).

Residues 1 to 49 form a disordered region; the sequence is MAIISSKKQPPEPNGQPNKRPESAPAAPKEKVLQPEAAIDEQGKQEESI. A large ATPase domain (RuvB-L) region spans residues 13-210; sequence PNGQPNKRPE…FGLIQKLRFY (198 aa). ATP-binding positions include isoleucine 49, arginine 50, glycine 91, lysine 94, threonine 95, threonine 96, 157 to 159, arginine 200, tyrosine 210, and arginine 247; that span reads EDY. Threonine 95 lines the Mg(2+) pocket. The small ATPAse domain (RuvB-S) stretch occupies residues 211 to 281; that stretch reads EVDELSQIVL…IAAEALQLFQ (71 aa). The interval 284–366 is head domain (RuvB-H); that stretch reads PCGLDWTDRR…TPPNEQLSLL (83 aa). 2 residues coordinate DNA: arginine 339 and arginine 344.

It belongs to the RuvB family. As to quaternary structure, homohexamer. Forms an RuvA(8)-RuvB(12)-Holliday junction (HJ) complex. HJ DNA is sandwiched between 2 RuvA tetramers; dsDNA enters through RuvA and exits via RuvB. An RuvB hexamer assembles on each DNA strand where it exits the tetramer. Each RuvB hexamer is contacted by two RuvA subunits (via domain III) on 2 adjacent RuvB subunits; this complex drives branch migration. In the full resolvosome a probable DNA-RuvA(4)-RuvB(12)-RuvC(2) complex forms which resolves the HJ.

The protein resides in the cytoplasm. It catalyses the reaction ATP + H2O = ADP + phosphate + H(+). Its function is as follows. The RuvA-RuvB-RuvC complex processes Holliday junction (HJ) DNA during genetic recombination and DNA repair, while the RuvA-RuvB complex plays an important role in the rescue of blocked DNA replication forks via replication fork reversal (RFR). RuvA specifically binds to HJ cruciform DNA, conferring on it an open structure. The RuvB hexamer acts as an ATP-dependent pump, pulling dsDNA into and through the RuvAB complex. RuvB forms 2 homohexamers on either side of HJ DNA bound by 1 or 2 RuvA tetramers; 4 subunits per hexamer contact DNA at a time. Coordinated motions by a converter formed by DNA-disengaged RuvB subunits stimulates ATP hydrolysis and nucleotide exchange. Immobilization of the converter enables RuvB to convert the ATP-contained energy into a lever motion, pulling 2 nucleotides of DNA out of the RuvA tetramer per ATP hydrolyzed, thus driving DNA branch migration. The RuvB motors rotate together with the DNA substrate, which together with the progressing nucleotide cycle form the mechanistic basis for DNA recombination by continuous HJ branch migration. Branch migration allows RuvC to scan DNA until it finds its consensus sequence, where it cleaves and resolves cruciform DNA. In Trichormus variabilis (strain ATCC 29413 / PCC 7937) (Anabaena variabilis), this protein is Holliday junction branch migration complex subunit RuvB.